We begin with the raw amino-acid sequence, 468 residues long: Ubiquitin carboxyl-terminal hydrolase MINDY-1 (468 aa).

Positions 1 to 19 (MEQPQTENPAPSKATSAET) are enriched in polar residues. Residues 1-105 (MEQPQTENPA…RPQELPQSPR (105 aa)) are disordered. A compositionally biased stretch (basic and acidic residues) spans 22-41 (SENHEALSGPEKHPQDKDGA). A compositionally biased stretch (low complexity) spans 43-54 (ADGAAGEQEPGD). Residues 68–80 (CPPPEASSSPPGP) are compositionally biased toward pro residues. A Phosphoserine modification is found at Ser103. Cys137 acts as the Nucleophile in catalysis. His319 serves as the catalytic Proton acceptor. The interval 388 to 427 (QVDQDYLIALSLQQQQQPQGTLGLSDLELAQQLQQEEYQQ) is ubiquitin-binding domain (UBD). Residues 423-432 (EEYQQQQAVQ) are compositionally biased toward low complexity. A disordered region spans residues 423 to 468 (EEYQQQQAVQPVRTRAPSPQGRGATSGRPAGERRQRSKTESDCVLL). Ser440 is modified (phosphoserine). The span at 452–468 (AGERRQRSKTESDCVLL) shows a compositional bias: basic and acidic residues.

It belongs to the MINDY deubiquitinase family. FAM63 subfamily.

The enzyme catalyses Thiol-dependent hydrolysis of ester, thioester, amide, peptide and isopeptide bonds formed by the C-terminal Gly of ubiquitin (a 76-residue protein attached to proteins as an intracellular targeting signal).. Functionally, hydrolase that can specifically remove 'Lys-48'-linked conjugated ubiquitin from proteins. Has exodeubiquitinase activity and has a preference for long polyubiquitin chains. May play a regulatory role at the level of protein turnover. The protein is Ubiquitin carboxyl-terminal hydrolase MINDY-1 (Mindy1) of Mus musculus (Mouse).